We begin with the raw amino-acid sequence, 557 residues long: Carboxypeptidase Y homolog A (557 aa).

Positions 1-17 are cleaved as a signal peptide; sequence MRVLPAAMLVGAATAAV. Residues 18–138 constitute a propeptide that is removed on maturation; it reads PPFQQVLGGN…KLEAYDLRVK (121 aa). Cystine bridges form between Cys-193-Cys-433, Cys-327-Cys-341, Cys-351-Cys-374, Cys-358-Cys-367, and Cys-396-Cys-403. N-linked (GlcNAc...) asparagine glycosylation is present at Asn-224. Residue Ser-280 is part of the active site. Asp-472 is an active-site residue. Asn-523 carries an N-linked (GlcNAc...) asparagine glycan. The active site involves His-534.

It belongs to the peptidase S10 family.

Its subcellular location is the vacuole. It carries out the reaction Release of a C-terminal amino acid with broad specificity.. Functionally, vacuolar carboxypeptidase involved in degradation of small peptides. Digests preferentially peptides containing an aliphatic or hydrophobic residue in P1' position, as well as methionine, leucine or phenylalanine in P1 position of ester substrate. This chain is Carboxypeptidase Y homolog A (cpyA), found in Aspergillus niger (strain ATCC MYA-4892 / CBS 513.88 / FGSC A1513).